Reading from the N-terminus, the 195-residue chain is Adenylate kinase (195 aa).

10–15 (GSGKGT) provides a ligand contact to ATP. The tract at residues 30-59 (STGDILRAERAAGTLLGQQAQSYMDRGELV) is NMP. AMP-binding positions include Thr-31, Arg-36, 57–59 (ELV), 85–88 (GFPR), and Gln-92. The segment at 126 to 140 (NRAKQAVNGQQRSDD) is LID. Arg-127 is a binding site for ATP. AMP is bound by residues Arg-137 and Arg-148. Arg-176 contributes to the ATP binding site.

Belongs to the adenylate kinase family. Monomer.

The protein resides in the cytoplasm. The enzyme catalyses AMP + ATP = 2 ADP. The protein operates within purine metabolism; AMP biosynthesis via salvage pathway; AMP from ADP: step 1/1. Its function is as follows. Catalyzes the reversible transfer of the terminal phosphate group between ATP and AMP. Plays an important role in cellular energy homeostasis and in adenine nucleotide metabolism. This Thermosynechococcus vestitus (strain NIES-2133 / IAM M-273 / BP-1) protein is Adenylate kinase.